An 842-amino-acid chain; its full sequence is Homeobox-leucine zipper protein REVOLUTA (842 aa).

Positions 1–20 (MEMAVANHRERSSDSMNRHL) are disordered. A compositionally biased stretch (basic and acidic residues) spans 7–20 (NHRERSSDSMNRHL). A DNA-binding region (homeobox) is located at residues 22-85 (SSGKYVRYTA…NRRCRDKQRK (64 aa)). Positions 90-121 (LQSVNRKLSAMNKLLMEENDRLQKQVSQLVCE) form a coiled coil. The START domain occupies 151–379 (DANSPAGLLS…LAQESNGEVV (229 aa)).

Belongs to the HD-ZIP homeobox family. Class III subfamily. Homodimer. Heterodimer with ZPR1, ZPR2, ZPR3 or ZPR4. Interacts with ESR1 and ESR2. Interacts with ZPR1, ZPR2, ZPR3 and ZPR4. Heterodimerization with ZPR3 prevents DNA binding by REV. As to expression, expressed in the interfascicular regions of stem and vascular bundles of young roots and leaves.

The protein resides in the nucleus. Its function is as follows. Probable transcription factor involved in the regulation of interfascicular fiber (cortical cells) and secondary xylem differentiation in the inflorescence stems. Required for lateral shoot meristems (LSMs) and flower meristems (FMs) initiation. May be involved in the determination of vascular patterning and organ polarity. Directly regulates the expression of AGO10, ZPR1, ZPR2, ZPR3 and ZPR4. Required to regulate adaxial-abaxial polarity and leaf axial patterning. The sequence is that of Homeobox-leucine zipper protein REVOLUTA from Arabidopsis thaliana (Mouse-ear cress).